A 365-amino-acid polypeptide reads, in one-letter code: tRNA-specific 2-thiouridylase MnmA (365 aa).

ATP-binding positions include 6-13 and methionine 32; that span reads GMSGGVDS. Positions 92-94 are interaction with target base in tRNA; it reads NPD. Cysteine 97 acts as the Nucleophile in catalysis. An intrachain disulfide couples cysteine 97 to cysteine 197. Glycine 121 is a binding site for ATP. Residues 147-149 are interaction with tRNA; the sequence is KDQ. The active-site Cysteine persulfide intermediate is cysteine 197. The interaction with tRNA stretch occupies residues 315 to 316; it reads RY.

This sequence belongs to the MnmA/TRMU family.

The protein localises to the cytoplasm. It catalyses the reaction S-sulfanyl-L-cysteinyl-[protein] + uridine(34) in tRNA + AH2 + ATP = 2-thiouridine(34) in tRNA + L-cysteinyl-[protein] + A + AMP + diphosphate + H(+). Functionally, catalyzes the 2-thiolation of uridine at the wobble position (U34) of tRNA, leading to the formation of s(2)U34. The chain is tRNA-specific 2-thiouridylase MnmA from Azoarcus sp. (strain BH72).